A 366-amino-acid chain; its full sequence is GTPase Obg (366 aa).

The Obg domain maps to 1 to 159; sequence MKFLDEAKVY…KTIWLRLKLI (159 aa). The 168-residue stretch at 160-327 folds into the OBG-type G domain; that stretch reads ADAGLVGLPN…VLRALRDVIV (168 aa). GTP is bound by residues 166–173, 191–195, 212–215, 279–282, and 308–310; these read GLPNAGKS, FTTLH, DIPG, SQID, and SAI. Mg(2+) contacts are provided by serine 173 and threonine 193. The disordered stretch occupies residues 333–366; the sequence is DDETISQRPKKHRHKLEDRPQHENGPEESEEGEE. The span at 347–357 shows a compositional bias: basic and acidic residues; that stretch reads KLEDRPQHENG.

The protein belongs to the TRAFAC class OBG-HflX-like GTPase superfamily. OBG GTPase family. Monomer. It depends on Mg(2+) as a cofactor.

It localises to the cytoplasm. An essential GTPase which binds GTP, GDP and possibly (p)ppGpp with moderate affinity, with high nucleotide exchange rates and a fairly low GTP hydrolysis rate. Plays a role in control of the cell cycle, stress response, ribosome biogenesis and in those bacteria that undergo differentiation, in morphogenesis control. The chain is GTPase Obg from Allorhizobium ampelinum (strain ATCC BAA-846 / DSM 112012 / S4) (Agrobacterium vitis (strain S4)).